A 359-amino-acid chain; its full sequence is Flavonoid 8-O-methyltransferase 1 (359 aa).

D223 is a binding site for S-adenosyl-L-methionine. The active-site Proton acceptor is H261.

This sequence belongs to the class I-like SAM-binding methyltransferase superfamily. Cation-independent O-methyltransferase family. Expressed in leaves and trichomes, especially in cv. SD and cv. EMX-1, but barely in cv. MC and cv. SW.

It carries out the reaction an 8-hydroxyflavone + S-adenosyl-L-methionine = an 8-methoxyflavone + S-adenosyl-L-homocysteine + H(+). The catalysed reaction is 4',7,8-trihydroxyflavone + S-adenosyl-L-methionine = 4',7-dihydroxy-8-methoxyflavone + S-adenosyl-L-homocysteine + H(+). The enzyme catalyses 7,8-dihydroxyflavone + S-adenosyl-L-methionine = 7-hydroxy-8-methoxyflavone + S-adenosyl-L-homocysteine + H(+). It catalyses the reaction 3',4',7,8-tetrahydroxyflavone + S-adenosyl-L-methionine = 3',4,7-trihydroxy-8-methoxyflavone + S-adenosyl-L-homocysteine + H(+). It participates in flavonoid metabolism. With respect to regulation, strongly inhibited by gardenin B (GARD B). Cation-independent flavonoid 8-O-methyltransferase involved in the biosynthesis of polymethoxylated flavonoids natural products such as nevadensin and salvigenin, aroma compounds which contribute to the flavor of sweet basil, and exhibit pharmacological activities such as anti-allergic, anti-oxidant, antibacterial, anti-proliferative, and anti-inflammatory effects. Catalyzes S-adenosylmethionine-dependent regioselective 8-O-methylation of flavonoids; mediates likely the conversion of pilosin (PIL) to nevadensin (NEV) and of 8-hydroxysalvigenin (8-OH-SALV) to gardenin B (GARD B). Can also use 3',4',7,8-tetrahydroxyflavone as substrate. Accepts other unnatural O-diphenols including 7,8,4'-trihydroxy-flavone and 7-O-methyl-8-hydroxy-flavone, and, with a lower efficiency, 7,8-dihydroxy-flavone, as substrates. In Ocimum basilicum (Sweet basil), this protein is Flavonoid 8-O-methyltransferase 1.